Consider the following 330-residue polypeptide: Trans-1,2-dihydrobenzene-1,2-diol dehydrogenase (330 aa).

This sequence belongs to the Gfo/Idh/MocA family. In terms of assembly, homodimer.

It carries out the reaction (1R,2R)-1,2-dihydrobenzene-1,2-diol + NADP(+) = catechol + NADPH + H(+). The enzyme catalyses D-xylose + NADP(+) = D-xylono-1,5-lactone + NADPH + H(+). The polypeptide is Trans-1,2-dihydrobenzene-1,2-diol dehydrogenase (dhdh) (Xenopus laevis (African clawed frog)).